The primary structure comprises 155 residues: Interleukin-2 (155 aa).

Positions 1-20 are cleaved as a signal peptide; it reads MYKIQLLSCIALTLALVANG. The O-linked (GalNAc...) threonine glycan is linked to Thr23. The cysteines at positions 79 and 127 are disulfide-linked.

It belongs to the IL-2 family.

The protein resides in the secreted. Its function is as follows. Cytokine produced by activated CD4-positive helper T-cells and to a lesser extend activated CD8-positive T-cells and natural killer (NK) cells that plays pivotal roles in the immune response and tolerance. Binds to a receptor complex composed of either the high-affinity trimeric IL-2R (IL2RA/CD25, IL2RB/CD122 and IL2RG/CD132) or the low-affinity dimeric IL-2R (IL2RB and IL2RG). Interaction with the receptor leads to oligomerization and conformation changes in the IL-2R subunits resulting in downstream signaling starting with phosphorylation of JAK1 and JAK3. In turn, JAK1 and JAK3 phosphorylate the receptor to form a docking site leading to the phosphorylation of several substrates including STAT5. This process leads to activation of several pathways including STAT, phosphoinositide-3-kinase/PI3K and mitogen-activated protein kinase/MAPK pathways. Functions as a T-cell growth factor and can increase NK-cell cytolytic activity as well. Promotes strong proliferation of activated B-cells and subsequently immunoglobulin production. Plays a pivotal role in regulating the adaptive immune system by controlling the survival and proliferation of regulatory T-cells, which are required for the maintenance of immune tolerance. Moreover, participates in the differentiation and homeostasis of effector T-cell subsets, including Th1, Th2, Th17 as well as memory CD8-positive T-cells. This is Interleukin-2 (IL2) from Bubalus bubalis (Domestic water buffalo).